The sequence spans 253 residues: 2,3-bisphosphoglycerate-dependent phosphoglycerate mutase (253 aa).

Substrate-binding positions include 12–19 (RHGESEWN), 25–26 (TG), Arg-64, 91–94 (ERHY), Lys-102, 118–119 (RR), and 187–188 (GN). Residue His-13 is the Tele-phosphohistidine intermediate of the active site. The Proton donor/acceptor role is filled by Glu-91.

This sequence belongs to the phosphoglycerate mutase family. BPG-dependent PGAM subfamily.

It carries out the reaction (2R)-2-phosphoglycerate = (2R)-3-phosphoglycerate. The protein operates within carbohydrate degradation; glycolysis; pyruvate from D-glyceraldehyde 3-phosphate: step 3/5. In terms of biological role, catalyzes the interconversion of 2-phosphoglycerate and 3-phosphoglycerate. The sequence is that of 2,3-bisphosphoglycerate-dependent phosphoglycerate mutase from Streptomyces griseus subsp. griseus (strain JCM 4626 / CBS 651.72 / NBRC 13350 / KCC S-0626 / ISP 5235).